A 499-amino-acid polypeptide reads, in one-letter code: Zinc finger protein PLAG1 (499 aa).

The disordered stretch occupies residues methionine 1–asparagine 33. An interaction with KPNA2 region spans residues alanine 2–alanine 84. The Nuclear localization signal signature appears at lysine 22–arginine 25. 7 consecutive C2H2-type zinc fingers follow at residues phenylalanine 34–histidine 56, tyrosine 62–histidine 86, histidine 92–histidine 114, phenylalanine 121–histidine 143, leucine 150–histidine 172, histidine 185–histidine 207, and phenylalanine 213–histidine 236. Positions lysine 41–lysine 242 are decreased nuclear import with localization in the nucleus but also in the cytoplasm. The interval valine 243 to leucine 383 is repression domain; contains 3 sumoylation motifs and massively decrease transcription activity. The activates transcription; Inhibition of nuclear import due to lack of NLS and KPNA2 interaction stretch occupies residues valine 243–glutamine 499. Glycyl lysine isopeptide (Lys-Gly) (interchain with G-Cter in SUMO) cross-links involve residues lysine 244 and lysine 263. Over residues glycine 365 to serine 379 the composition is skewed to low complexity. Positions glycine 365–serine 400 are disordered. The massively activates transcription stretch occupies residues glutamate 384–glutamine 499.

It belongs to the krueppel C2H2-type zinc-finger protein family. Interacts with KPNA2, which escorts protein to the nucleus via interaction with nuclear localization signal. Interacts with E3 SUMO-protein ligase PIAS1, PIAS2 and PIAS4. Post-translationally, sumoylated with SUMO1; which inhibits transcriptional activity, but does not affect nuclear localization. Blockers of sumoylation pathway such as SENP3 and inactive UBE2I increases transcriptional capacity. Sumoylation is increased in the presence of PIAS1. In terms of processing, acetylated by lysine acetyltransferase EP300; which activates transcriptional capacity. Lysine residues that are sumoylated also seem to be target for acetylation. As to expression, expressed in heart, spleen, lung, kidney, brain, testis and epididymis but not in salivary glands.

The protein resides in the nucleus. Functionally, transcription factor whose activation results in up-regulation of target genes, such as IGFII, leading to uncontrolled cell proliferation: when overexpressed in cultured cells, higher proliferation rate and transformation are observed. Other target genes such as CRLF1, CRABP2, CRIP2, PIGF are strongly induced in cells with PLAG1 induction. Proto-oncogene whose ectopic expression can trigger the development of pleomorphic adenomas of the salivary gland and lipoblastomas. Cooperates with CBFB-MYH11. This chain is Zinc finger protein PLAG1 (Plag1), found in Mus musculus (Mouse).